Reading from the N-terminus, the 353-residue chain is Mannonate dehydratase (353 aa).

The protein belongs to the mannonate dehydratase family. Requires Fe(2+) as cofactor. It depends on Mn(2+) as a cofactor.

It carries out the reaction D-mannonate = 2-dehydro-3-deoxy-D-gluconate + H2O. It functions in the pathway carbohydrate metabolism; pentose and glucuronate interconversion. In terms of biological role, catalyzes the dehydration of D-mannonate. The chain is Mannonate dehydratase from Burkholderia cenocepacia (strain ATCC BAA-245 / DSM 16553 / LMG 16656 / NCTC 13227 / J2315 / CF5610) (Burkholderia cepacia (strain J2315)).